We begin with the raw amino-acid sequence, 239 residues long: Derlin-2 (239 aa).

Residues 1–57 (MAYQSLRLEYLQIPPVSRAYTTACVLTTAAVQLELITPFQLYFNPELIFKHFQIWRL) lie on the Cytoplasmic side of the membrane. The chain crosses the membrane as a helical span at residues 58–78 (ITNFLFFGPVGFNFLFNMIFL). Residues 79–96 (YRYCRMLEEGSFRGRTAD) lie on the Lumenal side of the membrane. Residues 97–117 (FVFMFLFGGFLMTLFGLFVSL) traverse the membrane as a helical segment. Residues 118-150 (VFLGQAFTIMLVYVWSRRNPYVRMNFFGLLNFQ) are Cytoplasmic-facing. The chain crosses the membrane as a helical span at residues 151-171 (APFLPWVLMGFSLLLGNSIIV). Asp-172 is a topological domain (lumenal). A helical transmembrane segment spans residues 173-193 (LLGIAVGHIYFFLEDIFPNQP). The Cytoplasmic segment spans residues 194-239 (GGIRILKTPSILRTIFDTPDEDPNYNPLPEERPGGFAWGEGQRLGG). The interval 214–239 (EDPNYNPLPEERPGGFAWGEGQRLGG) is disordered. A compositionally biased stretch (gly residues) spans 229–239 (FAWGEGQRLGG).

The protein belongs to the derlin family. In terms of assembly, forms homo- and heterooligomers with DERL3 and, to a lesser extent, with DERL1. Interacts with the SEL1L/SYVN1 and VCP/SELENOS protein complexes. Mediates association between VCP and EDEM1, as well as that between VCP and the misfolded glycoproteins. Interacts with OS9. Interacts with SELENOK and SELENOS. Interacts with the signal recognition particle/SRP and the SRP receptor; in the process of endoplasmic reticulum stress-induced pre-emptive quality control. Interacts with CCDC47. As to expression, widely expressed, with lowest levels in brain and heart.

Its subcellular location is the endoplasmic reticulum membrane. Its function is as follows. Functional component of endoplasmic reticulum-associated degradation (ERAD) for misfolded lumenal glycoproteins, but not that of misfolded nonglycoproteins. May act by forming a channel that allows the retrotranslocation of misfolded glycoproteins into the cytosol where they are ubiquitinated and degraded by the proteasome. May mediate the interaction between VCP and misfolded glycoproteins. May also be involved in endoplasmic reticulum stress-induced pre-emptive quality control, a mechanism that selectively attenuates the translocation of newly synthesized proteins into the endoplasmic reticulum and reroutes them to the cytosol for proteasomal degradation. The polypeptide is Derlin-2 (Mus musculus (Mouse)).